Here is a 943-residue protein sequence, read N- to C-terminus: Isoleucine--tRNA ligase 1 (943 aa).

Residues 58-68 (PYANGTIHIGH) carry the 'HIGH' region motif. Position 567 (E567) interacts with L-isoleucyl-5'-AMP. Residues 608–612 (KMSKS) carry the 'KMSKS' region motif. ATP is bound at residue K611. Zn(2+)-binding residues include C906, C909, C926, and C929.

This sequence belongs to the class-I aminoacyl-tRNA synthetase family. IleS type 1 subfamily. In terms of assembly, monomer. It depends on Zn(2+) as a cofactor.

It is found in the cytoplasm. The catalysed reaction is tRNA(Ile) + L-isoleucine + ATP = L-isoleucyl-tRNA(Ile) + AMP + diphosphate. Functionally, catalyzes the attachment of isoleucine to tRNA(Ile). As IleRS can inadvertently accommodate and process structurally similar amino acids such as valine, to avoid such errors it has two additional distinct tRNA(Ile)-dependent editing activities. One activity is designated as 'pretransfer' editing and involves the hydrolysis of activated Val-AMP. The other activity is designated 'posttransfer' editing and involves deacylation of mischarged Val-tRNA(Ile). Its function is as follows. Confers resistance to the antibiotic mupirocin (pseudomonic acid A), an Ile-analog produced by P.fluorescens NCIMB 10586 itself that competitively inhibits activation by Ile-tRNA synthetase, thus inhibiting protein biosynthesis. This Pseudomonas fluorescens protein is Isoleucine--tRNA ligase 1 (ileS1).